A 40-amino-acid polypeptide reads, in one-letter code: Ferredoxin-2 (40 aa).

The region spanning 3–40 is the 2Fe-2S ferredoxin-type domain; the sequence is YNIKLITPEGTKEITCSDSEYILDAAEEKGLDLPYSCR. Residue Cys-39 coordinates [2Fe-2S] cluster.

This sequence belongs to the 2Fe2S plant-type ferredoxin family. It depends on [2Fe-2S] cluster as a cofactor.

It is found in the plastid. The protein resides in the chloroplast. Functionally, ferredoxins are iron-sulfur proteins that transfer electrons in a wide variety of metabolic reactions. In Pisum sativum (Garden pea), this protein is Ferredoxin-2.